Reading from the N-terminus, the 382-residue chain is Glutaminyl-peptide cyclotransferase-like protein (382 aa).

The chain crosses the membrane as a helical span at residues 35 to 55 (LLPLLLALAVGSAFYTIWSGW). Cysteine 167 and cysteine 191 are disulfide-bonded. Zn(2+) is bound at residue aspartate 186. Glutamate 225 acts as the Proton acceptor in catalysis. A Zn(2+)-binding site is contributed by glutamate 226. The active-site Proton acceptor is the aspartate 269. Zn(2+) is bound at residue histidine 351.

It belongs to the glutaminyl-peptide cyclotransferase family.

It localises to the golgi apparatus membrane. The enzyme catalyses N-terminal L-glutaminyl-[peptide] = N-terminal 5-oxo-L-prolyl-[peptide] + NH4(+). Its function is as follows. Responsible for the biosynthesis of pyroglutamyl peptides. In Homo sapiens (Human), this protein is Glutaminyl-peptide cyclotransferase-like protein (QPCTL).